A 975-amino-acid chain; its full sequence is Cation-chloride cotransporter 1 (975 aa).

2 disordered regions span residues 1 to 29 (MDSG…SKYR) and 104 to 124 (EQIQ…TQGH). Residues 1 to 132 (MDSGDIEEAG…GHPKPPALKM (132 aa)) lie on the Cytoplasmic side of the membrane. The chain crosses the membrane as a helical span at residues 133 to 153 (GTMMGVFVPCLQNILGIIYYI). Topologically, residues 154 to 167 (RFTWIVGMAGIGQG) are extracellular. The helical transmembrane segment at 168–188 (LVLVFLCGLCTFLTTISLSAI) threads the bilayer. Residues 189–214 (ATNGAMKGGGPYYLIGRALGPEVGIS) are Cytoplasmic-facing. A helical membrane pass occupies residues 215-235 (IGLCFFLGNAVAGALYVLGAV). The Extracellular segment spans residues 236 to 273 (ETFLKAFPAAGIFRETITKVNGTAVSESIQSPNSHDLQ). N-linked (GlcNAc...) asparagine glycosylation is present at N256. A helical membrane pass occupies residues 274–294 (VYGIVVTILLCFIVFGGVKMI). Over 295-296 (NR) the chain is Cytoplasmic. The chain crosses the membrane as a helical span at residues 297–317 (VAPAFLVPVLLSIFCIFIGIF). The Extracellular segment spans residues 318-359 (LAKTDDPDNGITGLRLKSFKDNWGSAYQMTNDAGIPDPTGGT). The helical transmembrane segment at 360–380 (YWSFNELVGLFFPAVTGIMAG) threads the bilayer. Topologically, residues 381–398 (SNRSASLKDTQKSIPVGT) are cytoplasmic. The helical transmembrane segment at 399-419 (LAATLTTTSLYLISVLFFGAV) threads the bilayer. The Extracellular portion of the chain corresponds to 420–434 (ATRDKLLTDRLLTAT). Residues 435–455 (IAWPFPAIVHVGIILSTLGAA) form a helical membrane-spanning segment. At 456 to 490 (LQSLTGAPRLLAAIANDDILPILNYFKVADTSEPH) the chain is on the cytoplasmic side. Residues 491 to 511 (IATLFTAFICIGCVVIGNLDL) form a helical membrane-spanning segment. Residues 512 to 515 (ITPT) are Extracellular-facing. A helical transmembrane segment spans residues 516–536 (VTMFYLLCYSGVNLSCFLLDL). Topologically, residues 537 to 544 (LDAPSWRP) are cytoplasmic. Residues 545-565 (RWKYHHWSLSFVGASLCIVIM) traverse the membrane as a helical segment. Residues 566-571 (FLISWS) lie on the Extracellular side of the membrane. Residues 572-592 (FTVVAIALASLIYKYVGLKGK) form a helical membrane-spanning segment. Topologically, residues 593 to 975 (AGDWGDGFKS…YHRDVVTLFT (383 aa)) are cytoplasmic.

It belongs to the SLC12A transporter family. In terms of tissue distribution, expressed in young seedlings cotyledon tips, plant vasculature, root tips and axillary buds. Expressed in root vascular strand in the pericycle and other parenchyma cells bordering xylem vessels. Expressed in the xylem/symplast boundaries of rosette stems, rosette leaves and cauline leaves. Expressed in stipules, trichomes and hydathodes. Expressed in pollen grains.

The protein resides in the membrane. In terms of biological role, cation/chloride cotransporter that mediates potassium-chloride and sodium-chloride cotransports. Involved in plant development and Cl(-) homeostasis. May be involved in long distance Cl(-) transport. Does not function as an H(+)-dependent cotransporter. This chain is Cation-chloride cotransporter 1 (CCC1), found in Arabidopsis thaliana (Mouse-ear cress).